The following is a 159-amino-acid chain: Ribosomal RNA large subunit methyltransferase H (159 aa).

S-adenosyl-L-methionine contacts are provided by residues leucine 76, glycine 108, and 127–132 (FGLLTL).

The protein belongs to the RNA methyltransferase RlmH family. Homodimer.

Its subcellular location is the cytoplasm. The enzyme catalyses pseudouridine(1915) in 23S rRNA + S-adenosyl-L-methionine = N(3)-methylpseudouridine(1915) in 23S rRNA + S-adenosyl-L-homocysteine + H(+). In terms of biological role, specifically methylates the pseudouridine at position 1915 (m3Psi1915) in 23S rRNA. The polypeptide is Ribosomal RNA large subunit methyltransferase H (Streptococcus pyogenes serotype M18 (strain MGAS8232)).